We begin with the raw amino-acid sequence, 253 residues long: MHEGNRSPRPMRMEAKTVKPRHPLVSRLAELLVSTWGEYLQLEPYHLPADLGFVEGQLEGDRLTIVNRCYQSRVFRKLHLELATIGPNLDILHCVMYPRPQFDLPIYGTDIVASTQMVSAAIVDLSPVRGELPPAYLAGLEPSFARCTDFGQLRNLPPWGTIFSPRCVFARVVTPTEADLFMEISRAYLRFHCEQAARAEAVDTATEAQILAGQRHYCEQQQQNDKTRRILAQAFDEAWAERYIRTVLFDLPQ.

The protein belongs to the HY2 family.

It catalyses the reaction (2R,3Z)-phycocyanobilin + 4 oxidized [2Fe-2S]-[ferredoxin] = biliverdin IXalpha + 4 reduced [2Fe-2S]-[ferredoxin] + 4 H(+). Functionally, catalyzes the four-electron reduction of biliverdin IX-alpha (2-electron reduction at both the A and D rings); the reaction proceeds via an isolatable 2-electron intermediate, 181,182-dihydrobiliverdin. The chain is Phycocyanobilin:ferredoxin oxidoreductase (pcyA) from Gloeobacter violaceus (strain ATCC 29082 / PCC 7421).